A 684-amino-acid polypeptide reads, in one-letter code: MSEVNEMSGGSIGGELLRASPKVLTAGDRKLLKVELRPGDTTYVSWKKLMRDAGKVNGLSASVPDPPPNANPNLEFRIAPGHPVEIETNEQPHSNRFNAVIEKIERLYKGNDSSDGEELDGAPDDDEYDTEDSFIDDAELDEYFEVDNSTVKHDGFYVNRGKLERMEPSTTSNQQPKKRRRKDSAKPCRDAVDVSDKHTKLSITARKKDQSTAPGSWKTQESPLPSGAQDANTSVPLDDVKHSDRANHQSRNDTSHKSRETGSSSALHQKYSNKSLHQQSTSLLGKSPPNVFAEVTVVRQKENNGMHQLANVTGSRQSSQASKKDGSNVKSKTSILEKAIRELEKVVVESRPPAITENQEADTSSQAVKRRLPRDVKLKLAKVARIAQASQGKHSTELINRLMSIVGHLIQLRSLKRNLKIMIDMGDSATREKDTRFKQINNEVLDMIKAKVSLMESQAIKPEGATSDDFQDSVEKPSLKKFVMDAALEDKLCDLYDIFIDGLDEDQGPQTKKLYVNLAELWPNRLMDYRGIKHAIFRAKERRKALYGNLAKEMDQTKMKKSMKQLVPRTDCTAQPNTELVVQRQHSGEKKLIVDPNATSTSVVTSQTMVDRSNQQQPEKLKGISSSCNPTEETRVVKRKNEAVMAEKQVVLALKKPEHPQTRVIPAPQNLNIPRTTPDLNLPS.

Disordered stretches follow at residues tyrosine 108 to aspartate 137, tyrosine 157 to serine 287, asparagine 311 to lysine 332, methionine 609 to threonine 631, and proline 660 to serine 684. Residues serine 114–aspartate 137 are compositionally biased toward acidic residues. Basic and acidic residues-rich tracts occupy residues tyrosine 157–glutamate 167 and serine 184–threonine 199. The segment covering serine 211 to valine 235 has biased composition (polar residues). Positions aspartate 238–glutamate 260 are enriched in basic and acidic residues. 4 stretches are compositionally biased toward polar residues: residues threonine 261–leucine 284, asparagine 311–alanine 321, aspartate 611–threonine 631, and glutamine 669–serine 684.

Belongs to the ubinuclein family. Component of the HIRA complex made of UBN1, UBN2, ASF1A, CABIN1 and HIRA. Interacts with HIRA.

The protein resides in the nucleus. Its subcellular location is the nucleolus. Its function is as follows. May be required for replication-independent chromatin assembly. The polypeptide is Ubinuclein-1 (Arabidopsis thaliana (Mouse-ear cress)).